The primary structure comprises 208 residues: Probable GTP-binding protein EngB (208 aa).

The region spanning 23–205 is the EngB-type G domain; that stretch reads LTSEMVVLGR…RQTLLKHLLT (183 aa). GTP-binding positions include 31–38, 57–61, 84–87, 154–157, and 182–184; these read GRSNVGKS, GKTRL, DLPG, TKFD, and FNA. Residues Ser-38 and Thr-59 each coordinate Mg(2+).

The protein belongs to the TRAFAC class TrmE-Era-EngA-EngB-Septin-like GTPase superfamily. EngB GTPase family. Mg(2+) serves as cofactor.

Its function is as follows. Necessary for normal cell division and for the maintenance of normal septation. The protein is Probable GTP-binding protein EngB of Helicobacter pylori (strain ATCC 700392 / 26695) (Campylobacter pylori).